Reading from the N-terminus, the 890-residue chain is Protein translocase subunit SecA (890 aa).

ATP contacts are provided by residues Gln85, 103 to 107, and Asp491; that span reads GEGKT.

It belongs to the SecA family. In terms of assembly, monomer and homodimer. Part of the essential Sec protein translocation apparatus which comprises SecA, SecYEG and auxiliary proteins SecDF. Other proteins may also be involved.

It localises to the cell membrane. The protein resides in the cytoplasm. The catalysed reaction is ATP + H2O + cellular proteinSide 1 = ADP + phosphate + cellular proteinSide 2.. In terms of biological role, part of the Sec protein translocase complex. Interacts with the SecYEG preprotein conducting channel. Has a central role in coupling the hydrolysis of ATP to the transfer of proteins into and across the cell membrane, serving as an ATP-driven molecular motor driving the stepwise translocation of polypeptide chains across the membrane. This chain is Protein translocase subunit SecA, found in Mycoplasmoides gallisepticum (strain R(low / passage 15 / clone 2)) (Mycoplasma gallisepticum).